The primary structure comprises 146 residues: Large ribosomal subunit protein uL15 (146 aa).

The segment covering M1–R13 has biased composition (basic and acidic residues). Residues M1–Q54 form a disordered region. Gly residues predominate over residues T23–Q35.

This sequence belongs to the universal ribosomal protein uL15 family. As to quaternary structure, part of the 50S ribosomal subunit.

Functionally, binds to the 23S rRNA. This Lactobacillus gasseri (strain ATCC 33323 / DSM 20243 / BCRC 14619 / CIP 102991 / JCM 1131 / KCTC 3163 / NCIMB 11718 / NCTC 13722 / AM63) protein is Large ribosomal subunit protein uL15.